The primary structure comprises 405 residues: Argininosuccinate synthase (405 aa).

ATP is bound by residues 10–18 and Ala37; that span reads AYSGGLDTS. L-citrulline is bound by residues Tyr88 and Ser93. Gly118 contacts ATP. L-aspartate contacts are provided by Thr120, Asn124, and Asp125. Residue Asn124 participates in L-citrulline binding. 5 residues coordinate L-citrulline: Arg128, Ser179, Ser188, Glu264, and Tyr276.

Belongs to the argininosuccinate synthase family. Type 1 subfamily. In terms of assembly, homotetramer.

It is found in the cytoplasm. The enzyme catalyses L-citrulline + L-aspartate + ATP = 2-(N(omega)-L-arginino)succinate + AMP + diphosphate + H(+). It functions in the pathway amino-acid biosynthesis; L-arginine biosynthesis; L-arginine from L-ornithine and carbamoyl phosphate: step 2/3. This is Argininosuccinate synthase from Pseudomonas savastanoi pv. phaseolicola (strain 1448A / Race 6) (Pseudomonas syringae pv. phaseolicola (strain 1448A / Race 6)).